The chain runs to 354 residues: Src kinase-associated phosphoprotein 1 (354 aa).

The region spanning 107-210 (NVIKQGYLEK…WVDQISFLLK (104 aa)) is the PH domain. Tyrosine 142 and tyrosine 236 each carry phosphotyrosine. A phosphotyrosine; by FYN mark is found at tyrosine 267 and tyrosine 290. Residues 285 to 290 (RRRVDY) form an interaction with FYB1 region. Positions 289-350 (DYADYYQGLW…PKDYLTTAFE (62 aa)) constitute an SH3 domain.

The protein belongs to the SKAP family. In terms of assembly, homodimer. Interacts with FYN. Interacts with PTPRC. Interacts with GRB2 when phosphorylated on Tyr-267. Interacts with FYB1, which is required for SKAP2 protein stability. Part of a complex consisting of SKAP1, FYB1 and CLNK. Interacts with RASGRP1. Interacts with FYB2. In terms of processing, phosphorylated on tyrosines. Phosphorylation by FYN on Tyr-267 is required for GRB2 interaction. Phosphorylation by FYN on Tyr-290 abolishes interaction with FYB1. Tyr-236 is dephosphorylated by PTPRC. As to expression, expressed in mast cells (at protein level).

It localises to the cytoplasm. The protein localises to the nucleus. Its subcellular location is the cell membrane. Positively regulates T-cell receptor signaling by enhancing the MAP kinase pathway. Required for optimal conjugation between T-cells and antigen-presenting cells by promoting the clustering of integrin ITGAL on the surface of T-cells. May be involved in high affinity immunoglobulin epsilon receptor signaling in mast cells. The polypeptide is Src kinase-associated phosphoprotein 1 (Skap1) (Rattus norvegicus (Rat)).